A 162-amino-acid chain; its full sequence is Allophycocyanin alpha-B chain (162 aa).

N71 carries the N4-methylasparagine modification. Residue C81 coordinates (2R,3E)-phycocyanobilin.

This sequence belongs to the phycobiliprotein family. Post-translationally, contains one covalently linked phycocyanobilin chromophore.

It localises to the plastid. The protein localises to the cyanelle thylakoid membrane. Functionally, allophycocyanin is a photosynthetic bile pigment-protein complex with maximum absorption at approximately 650 nanometers. The polypeptide is Allophycocyanin alpha-B chain (apcD) (Cyanophora paradoxa).